A 413-amino-acid polypeptide reads, in one-letter code: Prophage integrase IntA (413 aa).

Positions 105-186 constitute a Core-binding (CB) domain; the sequence is NTFLLVAERW…RINEVMIYAQ (82 aa). Residues 209 to 386 form the Tyr recombinase domain; the sequence is KNMPSIRPDQ…DYLEQRRPMM (178 aa). Catalysis depends on residues Arg-248, Lys-275, His-337, Arg-340, and His-363. The active-site O-(3'-phospho-DNA)-tyrosine intermediate is Tyr-373.

The protein belongs to the 'phage' integrase family.

Its function is as follows. Integrase is necessary for integration of the phage into the host genome by site-specific recombination. In conjunction with excisionase, integrase is also necessary for excision of the prophage from the host genome. Part of the cryptic P4-like prophage CP4-57, it excises the prophage when overexpressed, which also requires integration host factor (encoded by ihfA and ihfB). Overexpression of AlpA leads to excision of the CP4-57 prophage, which inactivates ssrA (the gene upstream of the prophage) that encodes tmRNA which is required to rescue stalled ribosomes in a process known as trans-translation. In Escherichia coli (strain K12), this protein is Prophage integrase IntA (intA).